The following is a 765-amino-acid chain: Palmitoyltransferase ZDHHC8 (765 aa).

The Cytoplasmic portion of the chain corresponds to 1–13 (MPRSPGTRLKPAK). The helical transmembrane segment at 14–34 (YIPVATAAALLVGSSTLFFVF) threads the bilayer. Topologically, residues 35–52 (TCPWLTRAVSPAVPVYNG) are lumenal. The helical transmembrane segment at 53 to 73 (IIFLFVLANFSMATFMDPGVF) threads the bilayer. Topologically, residues 74–148 (PRADEDEDKE…NCIGRRNYRY (75 aa)) are cytoplasmic. In terms of domain architecture, DHHC spans 104–154 (KWCATCHFYRPPRCSHCSVCDNCVEDFDHHCPWVNNCIGRRNYRYFFLFLL). The S-palmitoyl cysteine intermediate role is filled by Cys-134. Residues 149–169 (FFLFLLSLSAHMVGVVAFGLV) form a helical membrane-spanning segment. The Lumenal segment spans residues 170 to 190 (YVLNHAEGLGAAHTTITMAVM). The helical transmembrane segment at 191–211 (CVAGLFFIPVIGLTGFHVVLV) threads the bilayer. The Cytoplasmic portion of the chain corresponds to 212-765 (TRGRTTNEQV…VGGTTYEISV (554 aa)). A disordered region spans residues 293–352 (GLGRSKSKGSLDRLDEKPLDLGPPLPPKIEAGTFSSDLQTPRPGSAESALSVQRTSPPTP). Basic and acidic residues predominate over residues 301 to 311 (GSLDRLDEKPL). A Phosphoserine modification is found at Ser-337. Omega-N-methylarginine is present on Arg-441. A disordered region spans residues 509–540 (LHPGATGDPPRPLPRSFSPVLGPRPREPSPVR). Phosphoserine is present on residues Ser-606, Ser-627, Ser-675, Ser-682, Ser-725, and Ser-743. The interval 613-747 (GPGFGGARNP…PGPSASPTRH (135 aa)) is disordered. Low complexity predominate over residues 622 to 653 (PALQTSLSSLSSSVSRAPRTSSSSLQADQASS).

It belongs to the DHHC palmitoyltransferase family. ERF2/ZDHHC9 subfamily. As to expression, widely expressed.

It localises to the golgi apparatus membrane. Its subcellular location is the mitochondrion membrane. It catalyses the reaction L-cysteinyl-[protein] + hexadecanoyl-CoA = S-hexadecanoyl-L-cysteinyl-[protein] + CoA. Functionally, palmitoyltransferase that catalyzes the addition of palmitate onto various protein substrates and therefore functions in several unrelated biological processes. Through the palmitoylation of ABCA1 regulates the localization of the transporter to the plasma membrane and thereby regulates its function in cholesterol and phospholipid efflux. Could also pamitoylate the D(2) dopamine receptor DRD2 and regulate its stability and localization to the plasma membrane. Could also play a role in glutamatergic transmission. (Microbial infection) Able to palmitoylate SARS coronavirus-2/SARS-CoV-2 spike protein following its synthesis in the endoplasmic reticulum (ER). In the infected cell, promotes spike biogenesis by protecting it from premature ER degradation, increases half-life and controls the lipid organization of its immediate membrane environment. Once the virus has formed, spike palmitoylation controls fusion with the target cell. In Homo sapiens (Human), this protein is Palmitoyltransferase ZDHHC8.